Consider the following 481-residue polypeptide: Solute carrier family 46 member 2 (481 aa).

The Cytoplasmic segment spans residues 1–37 (MGPEAAGPGRGAAPRLQVRTWIEPVVAATQVASSLYE). Residues 38-58 (AGLLLVVKASFGAGAGAGAGA) traverse the membrane as a helical segment. At 59–83 (ASNHSAGPPRGAPEDQQQRAISNFY) the chain is on the extracellular side. An N-linked (GlcNAc...) asparagine glycan is attached at asparagine 61. The chain crosses the membrane as a helical span at residues 84 to 104 (IVYNLVVGLTPLLSAYALGWL). Topologically, residues 105–113 (SDRRHRKVA) are cytoplasmic. Residues 114-134 (ICVALLGFLLSRVGLLLKVLL) traverse the membrane as a helical segment. Residues 135–143 (DWPVEVLYG) are Extracellular-facing. The helical transmembrane segment at 144 to 164 (AAALNGLCGGFSAFWAGVMAL) threads the bilayer. Residues 165 to 179 (GSLGSSEGRRSVRLV) lie on the Cytoplasmic side of the membrane. Residues 180 to 200 (LIDLILGLAGFCGSMASGHLF) traverse the membrane as a helical segment. The Extracellular segment spans residues 201 to 210 (KQVAGHSGQG). Residues 211–231 (LVLTACSVSCATFALLYSLLV) form a helical membrane-spanning segment. Residues 232-286 (LKVPEAAAGSGQALSAGDSVAGTVGTYRTLDPDHSDKQSVQGLHPPSPGKAKPRR) lie on the Cytoplasmic side of the membrane. A disordered region spans residues 263–282 (PDHSDKQSVQGLHPPSPGKA). A helical membrane pass occupies residues 287–307 (TIIALLFLGAIVYDLAVVGTV). Residues 308-326 (DVMPLFVLREPLSWNQVQV) are Extracellular-facing. Residues 327 to 347 (GYGMAAGYTIFITSFLGVLVF) form a helical membrane-spanning segment. The Cytoplasmic portion of the chain corresponds to 348–353 (SRCFQD). A helical membrane pass occupies residues 354 to 374 (TTMIMIGMVSFGSGALLLAFV). Topologically, residues 375 to 376 (KE) are extracellular. A helical membrane pass occupies residues 377-397 (TYMFYIARAVMLFALIPITTI). Residues 398 to 412 (RSAMSKLIKGSSYGK) lie on the Cytoplasmic side of the membrane. Residues 413-433 (VFVILQLSLTLTGVVTSTVYN) form a helical membrane-spanning segment. Over 434-446 (KIYQVTMEKFIGT) the chain is Extracellular. The chain crosses the membrane as a helical span at residues 447 to 467 (CFALSSFLSFLAIIPIGIVAY). Residues 468-481 (KQASWLQYGDVRET) lie on the Cytoplasmic side of the membrane.

It belongs to the major facilitator superfamily. SLC46A family. Glycosylated. Highly expressed by the epididymal duct epithelium.

It is found in the endosome membrane. Its subcellular location is the cell membrane. It catalyses the reaction N-acetyl-beta-D-glucosaminyl-(1-&gt;4)-1,6-anhydro-N-acetyl-beta-D-muramoyl-L-alanyl-gamma-D-glutamyl-meso-2,6-diaminopimeloyl-D-alanine(out) + n H(+)(out) = N-acetyl-beta-D-glucosaminyl-(1-&gt;4)-1,6-anhydro-N-acetyl-beta-D-muramoyl-L-alanyl-gamma-D-glutamyl-meso-2,6-diaminopimeloyl-D-alanine(in) + n H(+)(in). It carries out the reaction L-alanyl-gamma-D-glutamyl-meso-2,6-diaminopimelate(out) + n H(+)(out) = L-alanyl-gamma-D-glutamyl-meso-2,6-diaminopimelate(in) + n H(+)(in). The enzyme catalyses N-acetyl-D-muramoyl-L-alanyl-D-isoglutamine(out) + n H(+)(out) = N-acetyl-D-muramoyl-L-alanyl-D-isoglutamine(in) + n H(+)(in). The catalysed reaction is 2',3'-cGAMP(out) + n H(+)(out) = 2',3'-cGAMP(in) + n H(+)(in). It catalyses the reaction 3',3'-cGAMP(out) + n H(+)(out) = 3',3'-cGAMP(in) + n H(+)(in). In terms of biological role, proton-coupled transporter that delivers pathogen-associated or danger-associated molecular patterns to cytosolic pattern recognition receptors as part of the innate immune response to microbes or tissue injury. Has selectivity toward muropeptides that contain the amino acid diaminopimelic acid (DAP-type peptidoglycan muropeptides) including Tri-DAP and tracheal toxin (TCT), common in Gram-negative bacteria and Gram-positive bacilli. In the context of immune recognition of skin microbiota, shuttles bacterial muropeptides across the endolysosomal membranes into the cytosol for recognition by NOD1, triggering MYD88-dependent secretion of IL1A and neutrophil recruitment in a pyroptosis-type inflammatory process. To a lesser extent and redundantly, transports muramyl dipeptides derived from most bacterial proteoglycans, eliciting NOD2 receptor activation and downstream inflammatory responses. Postulated to function as an importer of cyclic GMP-AMP dinucleotides (cGAMPs) in monocyte and macrophage cell lineages. Selectively imports cGAMPs derived from pathogenic bacteria such as 3'3'-cGAMP thus providing for differential immune recognition of pathogenic versus commensal bacteria. During tumorigenesis may transport extracellular tumor-derived 2'3'-cGAMP across the plasma membrane of M1-polarized macrophages to activate the anti-tumoral stimulator of interferon genes (STING) pathway. The transport mechanism, its electrogenicity and stoichiometry remain to be elucidated. This is Solute carrier family 46 member 2 from Canis lupus familiaris (Dog).